The chain runs to 376 residues: Mitogen-activated protein kinase 5 (376 aa).

A Protein kinase domain is found at 43 to 329; that stretch reads VPPIRPIGRG…VEEALCYPYL (287 aa). ATP is bound by residues 49–57 and Lys72; that span reads IGRGAYGFV. Asp169 functions as the Proton acceptor in the catalytic mechanism. Residue Thr201 is modified to Phosphothreonine. Residues 201–203 carry the TXY motif; that stretch reads TEY. At Tyr203 the chain carries Phosphotyrosine. Thr206 carries the post-translational modification Phosphothreonine.

This sequence belongs to the protein kinase superfamily. CMGC Ser/Thr protein kinase family. MAP kinase subfamily. Post-translationally, autophosphorylated on threonine and tyrosine residues. Dually phosphorylated on Thr-201 and Tyr-203, which activates the enzyme.

The enzyme catalyses L-seryl-[protein] + ATP = O-phospho-L-seryl-[protein] + ADP + H(+). It carries out the reaction L-threonyl-[protein] + ATP = O-phospho-L-threonyl-[protein] + ADP + H(+). Its activity is regulated as follows. Activated by threonine and tyrosine phosphorylation. Activated by the MAP kinase kinase MKK2. Activated by the MAP kinase kinase MKK6 in vitro. The chain is Mitogen-activated protein kinase 5 (MPK5) from Arabidopsis thaliana (Mouse-ear cress).